Consider the following 131-residue polypeptide: MFAVLKTGGKQYKVQAGDVLRVEKLACEAGDKIQFNDILMVGGDSVTVGAPFVAGAAVQAEVIAQIKGEKTIHYVKRRRKHSSQRTKGHRQQLTLLRVTDVLASGADASGVAVATGTADARRAAHNASAKE.

This sequence belongs to the bacterial ribosomal protein bL21 family. In terms of assembly, part of the 50S ribosomal subunit. Contacts protein L20.

This protein binds to 23S rRNA in the presence of protein L20. The protein is Large ribosomal subunit protein bL21 of Cereibacter sphaeroides (strain ATCC 17023 / DSM 158 / JCM 6121 / CCUG 31486 / LMG 2827 / NBRC 12203 / NCIMB 8253 / ATH 2.4.1.) (Rhodobacter sphaeroides).